Here is a 41-residue protein sequence, read N- to C-terminus: Pi-stichotoxin-Hmg5c (41 aa).

Disulfide bonds link Cys4-Cys37, Cys6-Cys30, and Cys20-Cys38.

The protein belongs to the sea anemone type 3 (BDS) potassium channel toxin family.

It is found in the secreted. It localises to the nematocyst. Functionally, toxin with different activities on acid-sensing ion channels (ASIC) and nicotinic acetylcholine receptors. Is able to bind T.californica muscle-type nicotinic acetylcholine receptors (nAChR) (alpha-1-beta-1-delta-epsilon (CHRNA1-CHRNB1-CHRND-CHRNE)), and human alpha-7/CHRNA7 nicotinic acetylcholine receptors. Weakly and reversibly inhibits rat homomeric ASIC1 (isoform ASIC1a) (IC(50)=1.25 uM), while it potentiates rat homomeric ASIC3 (EC(50)=1.53 uM). Rat ASIC1a current inhibition is not complete, and reaches a maximum of 86% inhibition. On rat ASIC3, does not activate the channel itself, but produces a remarkable potentiation of the transient current resulting from the acidic pulse. At the maximal applied concentration, elicits responses that are twice as high as those produced by extracellular protons. Surprisingly, shows a different activity on human ASIC3. On the truncated human ASIC3 (ASIC3-D20), the toxin weakly inhibits the channel. Molecular modeling interaction with rat ASIC1a suggests that it hinders the collapse of acidic pockets and stabilizes nonconducting channels state. In vivo, causes an anxiolytic effect on mouse behavior. Also shows an analgesic activity in an acid-induced muscle pain model, and important anti-inflammatory effect in models of acute local inflammation. This is Pi-stichotoxin-Hmg5c from Heteractis magnifica (Magnificent sea anemone).